The primary structure comprises 208 residues: Small ribosomal subunit protein uS4 (208 aa).

The region spanning 98–161 (RRLDNVIYRM…KELEIIKESL (64 aa)) is the S4 RNA-binding domain.

It belongs to the universal ribosomal protein uS4 family. Part of the 30S ribosomal subunit. Contacts protein S5. The interaction surface between S4 and S5 is involved in control of translational fidelity.

Functionally, one of the primary rRNA binding proteins, it binds directly to 16S rRNA where it nucleates assembly of the body of the 30S subunit. With S5 and S12 plays an important role in translational accuracy. This Thermodesulfovibrio yellowstonii (strain ATCC 51303 / DSM 11347 / YP87) protein is Small ribosomal subunit protein uS4.